The sequence spans 556 residues: Phosphomethylpyrimidine synthase (556 aa).

Residues Asn191, Met220, Tyr249, His285, 305-307 (SRG), 346-349 (DALR), and Glu385 each bind substrate. Residue His389 participates in Zn(2+) binding. Residue Tyr412 participates in substrate binding. Residue His453 coordinates Zn(2+). [4Fe-4S] cluster-binding residues include Cys535, Cys538, and Cys543.

The protein belongs to the ThiC family. Requires [4Fe-4S] cluster as cofactor.

The enzyme catalyses 5-amino-1-(5-phospho-beta-D-ribosyl)imidazole + S-adenosyl-L-methionine = 4-amino-2-methyl-5-(phosphooxymethyl)pyrimidine + CO + 5'-deoxyadenosine + formate + L-methionine + 3 H(+). It functions in the pathway cofactor biosynthesis; thiamine diphosphate biosynthesis. Its function is as follows. Catalyzes the synthesis of the hydroxymethylpyrimidine phosphate (HMP-P) moiety of thiamine from aminoimidazole ribotide (AIR) in a radical S-adenosyl-L-methionine (SAM)-dependent reaction. The polypeptide is Phosphomethylpyrimidine synthase (Chlorobaculum tepidum (strain ATCC 49652 / DSM 12025 / NBRC 103806 / TLS) (Chlorobium tepidum)).